Here is a 591-residue protein sequence, read N- to C-terminus: L-fucose isomerase (591 aa).

Residues Glu337 and Asp361 each act as proton acceptor in the active site. 3 residues coordinate Mn(2+): Glu337, Asp361, and His528.

The protein belongs to the L-fucose isomerase family. Homohexamer. Mn(2+) serves as cofactor.

Its subcellular location is the cytoplasm. It catalyses the reaction L-fucose = L-fuculose. Its pathway is carbohydrate degradation; L-fucose degradation; L-lactaldehyde and glycerone phosphate from L-fucose: step 1/3. Converts the aldose L-fucose into the corresponding ketose L-fuculose. The protein is L-fucose isomerase of Salmonella paratyphi A (strain ATCC 9150 / SARB42).